Consider the following 299-residue polypeptide: Taste receptor type 2 member 50 (299 aa).

Residue M1 is a topological domain, extracellular. The chain crosses the membrane as a helical span at residues 2–22; that stretch reads ITFLYIFFSILIMVLFVLGNF. Residues 23 to 55 lie on the Cytoplasmic side of the membrane; that stretch reads ANGFIALVNFIDWVKRKKISSADQILTALAVSR. Residues 56–76 traverse the membrane as a helical segment; that stretch reads IGLLWALLLNWYLTVLNPAFY. Residues 77–87 are Extracellular-facing; that stretch reads SVELRITSYNA. Residues 88 to 108 traverse the membrane as a helical segment; that stretch reads WVVTNHFSMWLAANLSIFYLL. Topologically, residues 109-126 are cytoplasmic; it reads KIANFSNLLFLHLKRRVR. Residues 127–147 traverse the membrane as a helical segment; the sequence is SVILVILLGTLIFLVCHLLVA. The Extracellular portion of the chain corresponds to 148–181; it reads NMDESMWAEEYEGNMTGKMKLRNTVHLSYLTVTT. N-linked (GlcNAc...) asparagine glycosylation occurs at N161. A helical membrane pass occupies residues 182-202; it reads LWSFIPFTLSLISFLMLICSL. Residues 203-229 lie on the Cytoplasmic side of the membrane; the sequence is CKHLKKMQLHGEGSQDLSTKVHIKALQ. Residues 230-250 traverse the membrane as a helical segment; that stretch reads TLISFLLLCAIFFLFLIVSVW. At 251–259 the chain is on the extracellular side; it reads SPRRLRNDP. Residues 260–280 traverse the membrane as a helical segment; it reads VVMVSKAVGNIYLAFDSFILI. The Cytoplasmic portion of the chain corresponds to 281-299; the sequence is WRTKKLKHTFLLILCQIRC.

Belongs to the G-protein coupled receptor T2R family. As to expression, expressed in subsets of taste receptor cells of the tongue and exclusively in gustducin-positive cells.

It is found in the membrane. Functionally, receptor that may play a role in the perception of bitterness and is gustducin-linked. May play a role in sensing the chemical composition of the gastrointestinal content. The activity of this receptor may stimulate alpha gustducin, mediate PLC-beta-2 activation and lead to the gating of TRPM5. This is Taste receptor type 2 member 50 (TAS2R50) from Homo sapiens (Human).